A 460-amino-acid polypeptide reads, in one-letter code: Ammonium transporter Rh type C (460 aa).

At 1–9 (MVWNTNLRW) the chain is on the cytoplasmic side. A helical transmembrane segment spans residues 10 to 30 (RLPVTCLLLQVALVVLFGVFV). Over 31 to 61 (RYDMDADPHWIDKKEAENSTSDMENEFYYRY) the chain is Extracellular. Asparagine 48 carries N-linked (GlcNAc...) asparagine glycosylation. A helical transmembrane segment spans residues 62 to 82 (PSFQDVHVMIFVGFGFLMTFL). Over 83-90 (QRYGYSSV) the chain is Cytoplasmic. The helical transmembrane segment at 91–111 (GFNFLLAAFGIQWALLLQGWF) threads the bilayer. Residues 112-125 (HSYYRGYIRVGVEN) are Extracellular-facing. A helical membrane pass occupies residues 126–145 (LINADFCVGSVCVAFGAVLG). Topologically, residues 146-151 (KVSPVQ) are cytoplasmic. Residues 152 to 174 (LLIMTLFQVTLFSVNEFILLNLL) traverse the membrane as a helical segment. Residues 175-179 (EVKDA) lie on the Extracellular side of the membrane. A helical membrane pass occupies residues 180-200 (GGSMTIHTFGAYFGLTVTWIL). The Cytoplasmic segment spans residues 201-219 (YRPGLHQSKERQSSVYHSD). A helical membrane pass occupies residues 220–240 (LFAMIGTLFLWMYWPSFNSAV). The Extracellular segment spans residues 241–251 (SNHGDAQHRAA). Residues 252–272 (INTYCSLAACVLTSVALSSAL) traverse the membrane as a helical segment. Residues 273–285 (HKKGKLDMVHIQN) lie on the Cytoplasmic side of the membrane. The chain crosses the membrane as a helical span at residues 286 to 306 (ATLAGGVAVGTAAEMMLMPYG). A topological domain (extracellular) is located at residue serine 307. Residues 308–328 (LIVGFICGIVSTLGFVYLTPF) form a helical membrane-spanning segment. At 329–339 (LESRLRVQDTC) the chain is on the cytoplasmic side. A helical transmembrane segment spans residues 340-360 (GIHNLHGIPGIIGAIVGAVTA). Residues 361–396 (SCANTDVYGVNGLTQAFGFDGFKTNRTPSMQGKFQA) lie on the Extracellular side of the membrane. A helical membrane pass occupies residues 397-417 (AGLFVSLAMALVGGIIVGIIL). At 418–460 (KLPFWGQPADENCFEDAIYWEMPEEPKSTVLHPEDSTLKPSEP) the chain is on the cytoplasmic side.

Belongs to the ammonium transporter (TC 2.A.49) family. Rh subfamily. Homotrimer. Post-translationally, N-glycosylated.

Its subcellular location is the apical cell membrane. The catalysed reaction is NH4(+)(in) = NH4(+)(out). It carries out the reaction methylamine(out) = methylamine(in). It catalyses the reaction CO2(out) = CO2(in). Ammonium transporter involved in the maintenance of acid-base homeostasis. Transports ammonium and its related derivative methylammonium across the plasma membrane of epithelial cells likely contributing to renal transepithelial ammonia transport and ammonia metabolism. Postulated to primarily mediate an electroneutral bidirectional transport of NH3 ammonia species according to a mechanism that implies interaction of an NH4(+) ion with acidic residues of the pore entry followed by dissociation of NH4(+) into NH3 and H(+). As a result NH3 transits through the central pore and is protonated on the extracellular side reforming NH4(+). May act as a CO2 channel providing for renal acid secretion. The chain is Ammonium transporter Rh type C (RHCG) from Canis lupus familiaris (Dog).